The following is a 173-amino-acid chain: Putative phosphoesterase GTNG_0743 (173 aa).

H34 functions as the Proton donor in the catalytic mechanism. 2 short sequence motifs (HXTX) span residues 34 to 37 (HITL) and 115 to 118 (HITI). The Proton acceptor role is filled by H115.

This sequence belongs to the 2H phosphoesterase superfamily. YjcG family.

The polypeptide is Putative phosphoesterase GTNG_0743 (Geobacillus thermodenitrificans (strain NG80-2)).